Consider the following 574-residue polypeptide: Arginine--tRNA ligase (574 aa).

The 'HIGH' region motif lies at 124 to 134 (ANPNGPLHIGH).

It belongs to the class-I aminoacyl-tRNA synthetase family.

It localises to the cytoplasm. The enzyme catalyses tRNA(Arg) + L-arginine + ATP = L-arginyl-tRNA(Arg) + AMP + diphosphate. This is Arginine--tRNA ligase from Methanococcus aeolicus (strain ATCC BAA-1280 / DSM 17508 / OCM 812 / Nankai-3).